A 186-amino-acid polypeptide reads, in one-letter code: Probable nicotinate-nucleotide adenylyltransferase (186 aa).

The protein belongs to the NadD family.

It carries out the reaction nicotinate beta-D-ribonucleotide + ATP + H(+) = deamido-NAD(+) + diphosphate. It functions in the pathway cofactor biosynthesis; NAD(+) biosynthesis; deamido-NAD(+) from nicotinate D-ribonucleotide: step 1/1. Catalyzes the reversible adenylation of nicotinate mononucleotide (NaMN) to nicotinic acid adenine dinucleotide (NaAD). This is Probable nicotinate-nucleotide adenylyltransferase from Tropheryma whipplei (strain Twist) (Whipple's bacillus).